We begin with the raw amino-acid sequence, 142 residues long: Transcription antitermination protein NusB (142 aa).

The protein belongs to the NusB family.

In terms of biological role, involved in transcription antitermination. Required for transcription of ribosomal RNA (rRNA) genes. Binds specifically to the boxA antiterminator sequence of the ribosomal RNA (rrn) operons. This chain is Transcription antitermination protein NusB, found in Anaeromyxobacter dehalogenans (strain 2CP-1 / ATCC BAA-258).